A 235-amino-acid polypeptide reads, in one-letter code: Adapter protein MecA (235 aa).

Over residues 113–135 the composition is skewed to basic and acidic residues; the sequence is LRQSDKGDIVKSKVSSSDHKDGS. The disordered stretch occupies residues 113–136; sequence LRQSDKGDIVKSKVSSSDHKDGSQ.

The protein belongs to the MecA family. Homodimer.

Enables the recognition and targeting of unfolded and aggregated proteins to the ClpC protease or to other proteins involved in proteolysis. This is Adapter protein MecA from Leuconostoc mesenteroides subsp. mesenteroides (strain ATCC 8293 / DSM 20343 / BCRC 11652 / CCM 1803 / JCM 6124 / NCDO 523 / NBRC 100496 / NCIMB 8023 / NCTC 12954 / NRRL B-1118 / 37Y).